Reading from the N-terminus, the 898-residue chain is Vacuolar protein sorting-associated protein 41 homolog (898 aa).

The span at 1 to 10 shows a compositional bias: basic and acidic residues; the sequence is MDESNDKENE. Positions 1–35 are disordered; the sequence is MDESNDKENEFGDSFLEDSGDITRTTEDEDEAPLE. Residues 614–756 form a CHCR repeat; that stretch reads LRLLLDNADS…VADFPTHFSQ (143 aa). An RING-type; atypical zinc finger spans residues 835 to 890; it reads CSLCSQVIMNTGQDMIPRKFNDIKVFKCGHIFHLTCSASEIDRRQMIEDGICIACS.

Belongs to the VPS41 family. As to quaternary structure, probable component of the homotypic fusion and vacuole protein sorting (HOPS) complex consisting of the core class C Vps proteins vps-11, vps-16, vps-18, and which further associates with vps-33.1, vps-39 and vps-41.

Its subcellular location is the endosome membrane. It localises to the late endosome. The protein localises to the lysosome. It is found in the golgi apparatus. The protein resides in the trans-Golgi network. Its subcellular location is the early endosome. It localises to the cytoplasmic vesicle. The protein localises to the clathrin-coated vesicle. Its function is as follows. Plays a role in vesicle-mediated protein trafficking to lysosomal compartments including the endocytic membrane transport pathways. Believed to act in part as a core component of the putative HOPS endosomal tethering complex which is proposed to be involved in the rab-5-to-rab-7 endosome conversion probably implicating sand-1, and via binding SNAREs and SNARE complexes to mediate tethering and docking events during SNARE-mediated membrane fusion. The HOPS complex is proposed to be recruited to rab-7 on the late endosomal membrane and to regulate late endocytic, phagocytic and autophagic traffic towards lysosomes. Within the HOPS complex, contributes to the normal development of gut granules in the adult intestine. May mediate the tethering of autophagosomes with lysosomes. Has a role in the negative regulation of apoptosis. Required for uptake of exogenous dsRNA which is used in experimental RNA silencing. This is Vacuolar protein sorting-associated protein 41 homolog from Caenorhabditis briggsae.